The primary structure comprises 574 residues: K(+)/H(+) antiporter NhaP2 (574 aa).

Helical transmembrane passes span 6–26 (INSFFLIGALLAAVSVLLSPM), 30–50 (LGIPILLIFLAVGILAGEDGL), 58–78 (YSTAYLVSNLALAIILLDGGM), 87–107 (VALWPALSLATFGVAITTSIT), 109–129 (LMAAWLFDLHWLQGLLVGAIV), 173–193 (IAILANVDTELSVSFMLVSFI), 196–216 (FGLGICLGLGGGWLLWKLVNL), 219–239 (LAEGLYSILVLSGGLIIYAVS), 242–262 (LGGSGILSIYLVGLFLGNKPT), 271–291 (VLDGMTWVSQIGMFLVLGLLL), 299–319 (ILLPGFALAFGMILFARPLAV), 335–355 (WFISWVGLRGAVPIILAVFPM), and 359–379 (LPGAQLYFNLAFFVVLVSLLI). The 82-residue stretch at 405–486 (SGVEIYPSSE…LDALSHLFSQ (82 aa)) folds into the RCK C-terminal domain.

Belongs to the monovalent cation:proton antiporter 1 (CPA1) transporter (TC 2.A.36) family. NhaP2 subfamily.

The protein resides in the cell inner membrane. The enzyme catalyses K(+)(in) + H(+)(out) = K(+)(out) + H(+)(in). In terms of biological role, k(+)/H(+) antiporter that extrudes potassium in exchange for external protons and maintains the internal concentration of potassium under toxic levels. The sequence is that of K(+)/H(+) antiporter NhaP2 from Shewanella sp. (strain W3-18-1).